A 290-amino-acid polypeptide reads, in one-letter code: Light-independent protochlorophyllide reductase iron-sulfur ATP-binding protein (290 aa).

ATP contacts are provided by residues 10–15 (GIGKST) and K39. Position 14 (S14) interacts with Mg(2+). [4Fe-4S] cluster is bound by residues C95 and C129. Residue 180 to 181 (NR) participates in ATP binding.

It belongs to the NifH/BchL/ChlL family. Homodimer. Protochlorophyllide reductase is composed of three subunits; ChlL, ChlN and ChlB. Requires [4Fe-4S] cluster as cofactor.

Its subcellular location is the plastid. It localises to the chloroplast. It catalyses the reaction chlorophyllide a + oxidized 2[4Fe-4S]-[ferredoxin] + 2 ADP + 2 phosphate = protochlorophyllide a + reduced 2[4Fe-4S]-[ferredoxin] + 2 ATP + 2 H2O. It participates in porphyrin-containing compound metabolism; chlorophyll biosynthesis (light-independent). Component of the dark-operative protochlorophyllide reductase (DPOR) that uses Mg-ATP and reduced ferredoxin to reduce ring D of protochlorophyllide (Pchlide) to form chlorophyllide a (Chlide). This reaction is light-independent. The L component serves as a unique electron donor to the NB-component of the complex, and binds Mg-ATP. In Pyropia yezoensis (Susabi-nori), this protein is Light-independent protochlorophyllide reductase iron-sulfur ATP-binding protein.